The sequence spans 186 residues: Acireductone dioxygenase (186 aa).

Residues histidine 103, histidine 105, glutamate 109, and histidine 147 each contribute to the Fe(2+) site. Ni(2+)-binding residues include histidine 103, histidine 105, glutamate 109, and histidine 147.

Belongs to the acireductone dioxygenase (ARD) family. Monomer. Fe(2+) is required as a cofactor. The cofactor is Ni(2+).

The enzyme catalyses 1,2-dihydroxy-5-(methylsulfanyl)pent-1-en-3-one + O2 = 3-(methylsulfanyl)propanoate + CO + formate + 2 H(+). The catalysed reaction is 1,2-dihydroxy-5-(methylsulfanyl)pent-1-en-3-one + O2 = 4-methylsulfanyl-2-oxobutanoate + formate + 2 H(+). It functions in the pathway amino-acid biosynthesis; L-methionine biosynthesis via salvage pathway; L-methionine from S-methyl-5-thio-alpha-D-ribose 1-phosphate: step 5/6. Catalyzes 2 different reactions between oxygen and the acireductone 1,2-dihydroxy-3-keto-5-methylthiopentene (DHK-MTPene) depending upon the metal bound in the active site. Fe-containing acireductone dioxygenase (Fe-ARD) produces formate and 2-keto-4-methylthiobutyrate (KMTB), the alpha-ketoacid precursor of methionine in the methionine recycle pathway. Ni-containing acireductone dioxygenase (Ni-ARD) produces methylthiopropionate, carbon monoxide and formate, and does not lie on the methionine recycle pathway. The polypeptide is Acireductone dioxygenase (Parasynechococcus marenigrum (strain WH8102)).